The chain runs to 157 residues: 2-C-methyl-D-erythritol 2,4-cyclodiphosphate synthase (157 aa).

2 residues coordinate a divalent metal cation: aspartate 8 and histidine 10. 4-CDP-2-C-methyl-D-erythritol 2-phosphate-binding positions include 8-10 (DVH) and 34-35 (HS). Histidine 42 contributes to the a divalent metal cation binding site. 4-CDP-2-C-methyl-D-erythritol 2-phosphate is bound by residues 56–58 (DIG), 132–135 (TTNE), and arginine 142.

Belongs to the IspF family. Homotrimer. The cofactor is a divalent metal cation.

It catalyses the reaction 4-CDP-2-C-methyl-D-erythritol 2-phosphate = 2-C-methyl-D-erythritol 2,4-cyclic diphosphate + CMP. It functions in the pathway isoprenoid biosynthesis; isopentenyl diphosphate biosynthesis via DXP pathway; isopentenyl diphosphate from 1-deoxy-D-xylulose 5-phosphate: step 4/6. In terms of biological role, involved in the biosynthesis of isopentenyl diphosphate (IPP) and dimethylallyl diphosphate (DMAPP), two major building blocks of isoprenoid compounds. Catalyzes the conversion of 4-diphosphocytidyl-2-C-methyl-D-erythritol 2-phosphate (CDP-ME2P) to 2-C-methyl-D-erythritol 2,4-cyclodiphosphate (ME-CPP) with a corresponding release of cytidine 5-monophosphate (CMP). The polypeptide is 2-C-methyl-D-erythritol 2,4-cyclodiphosphate synthase (Chlorobium luteolum (strain DSM 273 / BCRC 81028 / 2530) (Pelodictyon luteolum)).